A 210-amino-acid polypeptide reads, in one-letter code: uncharacterized protein (210 aa).

6 helical membrane passes run 9-29, 35-55, 64-84, 91-111, 149-169, and 190-210; these read WVVT…IIAK, LIVN…MAWP, GPAV…VVAV, GLYG…AAMN, IWFS…AVFW, and IGQA…LFPV.

It is found in the cell membrane. This is an uncharacterized protein from Mycobacterium bovis (strain ATCC BAA-935 / AF2122/97).